The following is a 701-amino-acid chain: Pseudouridylate synthase PUS7L (701 aa).

The residue at position 79 (Ser79) is a Phosphoserine. Residue Asp339 is the Nucleophile of the active site. A TRUD domain is found at 424–647; that stretch reads GFVNYYGPQR…PGCYRQILKH (224 aa).

Belongs to the pseudouridine synthase TruD family.

It carries out the reaction a uridine in mRNA = a pseudouridine in mRNA. Pseudouridine synthase that catalyzes pseudouridylation of mRNAs. This Homo sapiens (Human) protein is Pseudouridylate synthase PUS7L.